The sequence spans 496 residues: Alanine aminotransferase 1 (496 aa).

The residue at position 2 (alanine 2) is an N-acetylalanine. Threonine 22 is subject to Phosphothreonine. The residue at position 314 (lysine 314) is an N6-(pyridoxal phosphate)lysine.

The protein belongs to the class-I pyridoxal-phosphate-dependent aminotransferase family. Alanine aminotransferase subfamily. Homodimer. The cofactor is pyridoxal 5'-phosphate. Mainly expressed in liver, intestine, colon and white adipose tissue.

Its subcellular location is the cytoplasm. It catalyses the reaction L-alanine + 2-oxoglutarate = pyruvate + L-glutamate. It participates in amino-acid degradation; L-alanine degradation via transaminase pathway; pyruvate from L-alanine: step 1/1. Functionally, catalyzes the reversible transamination between alanine and 2-oxoglutarate to form pyruvate and glutamate. Participates in cellular nitrogen metabolism and also in liver gluconeogenesis starting with precursors transported from skeletal muscles. In Mus musculus (Mouse), this protein is Alanine aminotransferase 1 (Gpt).